The following is a 222-amino-acid chain: uncharacterized protein (222 aa).

In terms of domain architecture, HTH gntR-type spans 8–77 (AKKNQIIYRY…NTPGYFVCKD (70 aa)).

This is an uncharacterized protein from Mycoplasma genitalium (strain ATCC 33530 / DSM 19775 / NCTC 10195 / G37) (Mycoplasmoides genitalium).